Consider the following 309-residue polypeptide: Porphobilinogen deaminase (309 aa).

Residue Cys243 is modified to S-(dipyrrolylmethanemethyl)cysteine.

This sequence belongs to the HMBS family. Monomer. Dipyrromethane is required as a cofactor.

The catalysed reaction is 4 porphobilinogen + H2O = hydroxymethylbilane + 4 NH4(+). It functions in the pathway porphyrin-containing compound metabolism; protoporphyrin-IX biosynthesis; coproporphyrinogen-III from 5-aminolevulinate: step 2/4. Tetrapolymerization of the monopyrrole PBG into the hydroxymethylbilane pre-uroporphyrinogen in several discrete steps. This Deinococcus geothermalis (strain DSM 11300 / CIP 105573 / AG-3a) protein is Porphobilinogen deaminase.